A 136-amino-acid chain; its full sequence is Cytokine-like protein 1 (136 aa).

Residues 1–22 (MRTPGPLPVLLLLLAGAPAARP) form the signal peptide.

Specifically expressed in CD34+ hematopoietic cells.

It is found in the secreted. The protein is Cytokine-like protein 1 (CYTL1) of Homo sapiens (Human).